A 356-amino-acid polypeptide reads, in one-letter code: SERTA domain-containing protein 4 (356 aa).

The tract at residues 33-53 is disordered; that stretch reads SYGGPSPPGPAQAPLQGDRGA. In terms of domain architecture, SERTA spans 101–147; that stretch reads IFEERAHILYMSLEKLKFIDDPEVYLRRSVLINNLMKRIHGEIIMQN. Positions 215–232 are enriched in low complexity; that stretch reads TAASSPSASSSSSSSSSS. 3 disordered regions span residues 215-238, 280-302, and 332-356; these read TAASSPSASSSSSSSSSSPPLPLP, KLNDEKANDDTNRDGGPLSHEPV, and WKKSLRKKEASPPSNKLCCSKGSKI. Basic and acidic residues predominate over residues 280 to 292; sequence KLNDEKANDDTNR.

This Homo sapiens (Human) protein is SERTA domain-containing protein 4 (SERTAD4).